Consider the following 419-residue polypeptide: UDP-N-acetylglucosamine 1-carboxyvinyltransferase 2 (419 aa).

22 to 23 (KN) is a binding site for phosphoenolpyruvate. Residue Arg-92 coordinates UDP-N-acetyl-alpha-D-glucosamine. Cys-116 acts as the Proton donor in catalysis. Cys-116 carries the 2-(S-cysteinyl)pyruvic acid O-phosphothioketal modification. UDP-N-acetyl-alpha-D-glucosamine-binding positions include 121 to 125 (RPIDL), Asp-306, and Ile-328.

Belongs to the EPSP synthase family. MurA subfamily.

The protein localises to the cytoplasm. It catalyses the reaction phosphoenolpyruvate + UDP-N-acetyl-alpha-D-glucosamine = UDP-N-acetyl-3-O-(1-carboxyvinyl)-alpha-D-glucosamine + phosphate. Its pathway is cell wall biogenesis; peptidoglycan biosynthesis. Its function is as follows. Cell wall formation. Adds enolpyruvyl to UDP-N-acetylglucosamine. This chain is UDP-N-acetylglucosamine 1-carboxyvinyltransferase 2, found in Streptococcus pyogenes serotype M3 (strain ATCC BAA-595 / MGAS315).